A 306-amino-acid polypeptide reads, in one-letter code: Probable cobalamin biosynthesis protein CobD (306 aa).

A run of 6 helical transmembrane segments spans residues 17-37 (IGEP…IIFF), 54-74 (LFGF…AYEI), 88-108 (ISLY…IEFS), 155-175 (ITDS…PGAF), 207-227 (ILNF…APFY), and 286-306 (SLKA…VLLM).

The protein belongs to the CobD/CbiB family.

Its subcellular location is the cell membrane. Its pathway is cofactor biosynthesis; adenosylcobalamin biosynthesis. Converts cobyric acid to cobinamide by the addition of aminopropanol on the F carboxylic group. In Methanococcus maripaludis (strain C5 / ATCC BAA-1333), this protein is Probable cobalamin biosynthesis protein CobD.